The primary structure comprises 481 residues: Bestrophin homolog 17 (481 aa).

The Cytoplasmic segment spans residues 1–27 (MTVSYQLDVSSGNPLLFLRLLGRWRGS). Residues 28-48 (IWKSVVGDLFVWLLFYYAIYF) form a helical membrane-spanning segment. The Extracellular segment spans residues 49 to 95 (AYRYAFSKQLQTVFEEISIHTDDRMKYLPLTFMLGFFVTTVFERWRS). A helical transmembrane segment spans residues 96–116 (ALNVMPFIESVALSVAVLLPG). At 117-230 (KGREDRLTRR…AMETLIKFDA (114 aa)) the chain is on the cytoplasmic side. A helical membrane pass occupies residues 231-251 (IPIPIAYPQVVFLAVRVYFAI). Over 252–274 (CLVSRQFLISDMKSKTQMDWPVP) the chain is Extracellular. The helical transmembrane segment at 275 to 295 (IMTVLEFIFVIGWMKVAEVLL) threads the bilayer. The Cytoplasmic portion of the chain corresponds to 296-481 (NPLGEDDDDF…SSEESVDKKG (186 aa)). The tract at residues 427-481 (AGMLNKSTQPDRPTMETVSEEHEPSHFYRGDRVHSSDSGLSKTQQSSEESVDKKG) is disordered. Residues 445 to 461 (SEEHEPSHFYRGDRVHS) show a composition bias toward basic and acidic residues. Residues 462–474 (SDSGLSKTQQSSE) are compositionally biased toward polar residues.

This sequence belongs to the anion channel-forming bestrophin (TC 1.A.46) family. Calcium-sensitive chloride channel subfamily. As to quaternary structure, forms oligomers.

The protein localises to the cell membrane. In terms of biological role, forms chloride channels. This is Bestrophin homolog 17 from Caenorhabditis elegans.